A 231-amino-acid polypeptide reads, in one-letter code: Non-fluorescent flavoprotein (231 aa).

This sequence belongs to the bacterial luciferase oxidoreductase family. As to quaternary structure, homodimer. It depends on FMN as a cofactor.

The protein is Non-fluorescent flavoprotein (luxF) of Photobacterium phosphoreum.